We begin with the raw amino-acid sequence, 248 residues long: 4-hydroxy-tetrahydrodipicolinate reductase (248 aa).

NAD(+) contacts are provided by residues 74 to 76 (GTT) and 99 to 102 (SANF). The Proton donor/acceptor role is filled by histidine 134. A (S)-2,3,4,5-tetrahydrodipicolinate-binding site is contributed by histidine 135. Residue lysine 138 is the Proton donor of the active site. A (S)-2,3,4,5-tetrahydrodipicolinate-binding site is contributed by 144-145 (GT).

Belongs to the DapB family.

Its subcellular location is the cytoplasm. The catalysed reaction is (S)-2,3,4,5-tetrahydrodipicolinate + NAD(+) + H2O = (2S,4S)-4-hydroxy-2,3,4,5-tetrahydrodipicolinate + NADH + H(+). The enzyme catalyses (S)-2,3,4,5-tetrahydrodipicolinate + NADP(+) + H2O = (2S,4S)-4-hydroxy-2,3,4,5-tetrahydrodipicolinate + NADPH + H(+). It functions in the pathway amino-acid biosynthesis; L-lysine biosynthesis via DAP pathway; (S)-tetrahydrodipicolinate from L-aspartate: step 4/4. Catalyzes the conversion of 4-hydroxy-tetrahydrodipicolinate (HTPA) to tetrahydrodipicolinate. The chain is 4-hydroxy-tetrahydrodipicolinate reductase from Chlorobium phaeobacteroides (strain BS1).